The following is a 71-amino-acid chain: Lysis protein (71 aa).

The segment at 1 to 24 (MQQPSQPTRESTKKPVPFQHEEYP) is disordered. Residues 34–56 (LYVLICLAIFLSKFTNQLLASLL) form a helical membrane-spanning segment.

It belongs to the Leviviricetes lysis protein family.

It is found in the host cell inner membrane. Its subcellular location is the host cell outer membrane. Induces the formation of specific membrane adhesion sites between the inner and outer membranes, apparently leading to host cell lysis. Lysis may be performed via activation of host murein hydrolases. In Enterobacteria phage fr (Bacteriophage fr), this protein is Lysis protein.